A 504-amino-acid chain; its full sequence is Cytochrome P450 6B2 (504 aa).

Cysteine 445 is a binding site for heme.

It belongs to the cytochrome P450 family. Heme serves as cofactor.

It is found in the endoplasmic reticulum membrane. The protein resides in the microsome membrane. The enzyme catalyses an organic molecule + reduced [NADPH--hemoprotein reductase] + O2 = an alcohol + oxidized [NADPH--hemoprotein reductase] + H2O + H(+). In Helicoverpa armigera (Cotton bollworm), this protein is Cytochrome P450 6B2 (CYP6B2).